A 225-amino-acid chain; its full sequence is 2-C-methyl-D-erythritol 4-phosphate cytidylyltransferase (225 aa).

The protein belongs to the IspD/TarI cytidylyltransferase family. IspD subfamily.

The catalysed reaction is 2-C-methyl-D-erythritol 4-phosphate + CTP + H(+) = 4-CDP-2-C-methyl-D-erythritol + diphosphate. Its pathway is isoprenoid biosynthesis; isopentenyl diphosphate biosynthesis via DXP pathway; isopentenyl diphosphate from 1-deoxy-D-xylulose 5-phosphate: step 2/6. Its function is as follows. Catalyzes the formation of 4-diphosphocytidyl-2-C-methyl-D-erythritol from CTP and 2-C-methyl-D-erythritol 4-phosphate (MEP). This chain is 2-C-methyl-D-erythritol 4-phosphate cytidylyltransferase, found in Cereibacter sphaeroides (strain ATCC 17023 / DSM 158 / JCM 6121 / CCUG 31486 / LMG 2827 / NBRC 12203 / NCIMB 8253 / ATH 2.4.1.) (Rhodobacter sphaeroides).